Consider the following 548-residue polypeptide: Asparagine--tRNA ligase, cytoplasmic (548 aa).

A disordered region spans residues 1-25 (MVLAELYVSDREGSDATGDGTKEKP). Residues 8–25 (VSDREGSDATGDGTKEKP) show a composition bias toward basic and acidic residues. Serine 61 is modified (phosphoserine). Residues 69-91 (MWHREQMKSESREKKEAEDSLRR) are disordered. Over residues 71-91 (HREQMKSESREKKEAEDSLRR) the composition is skewed to basic and acidic residues. At lysine 244 the chain carries N6-acetyllysine. Serine 482 is modified (phosphoserine). Lysine 490 is modified (N6-acetyllysine).

The protein belongs to the class-II aminoacyl-tRNA synthetase family. In terms of assembly, homodimer.

The protein localises to the cytoplasm. It carries out the reaction tRNA(Asn) + L-asparagine + ATP = L-asparaginyl-tRNA(Asn) + AMP + diphosphate + H(+). Its function is as follows. Catalyzes the attachment of asparagine to tRNA(Asn) in a two-step reaction: asparagine is first activated by ATP to form Asn-AMP and then transferred to the acceptor end of tRNA(Asn). In addition to its essential role in protein synthesis, acts as a signaling molecule that induced migration of CCR3-expressing cells. Has an essential role in the development of the cerebral cortex, being required for proper proliferation of radial glial cells. The polypeptide is Asparagine--tRNA ligase, cytoplasmic (Homo sapiens (Human)).